Reading from the N-terminus, the 309-residue chain is Olfactory receptor 5B2 (309 aa).

The Extracellular segment spans residues 1-23 (MENCTEVTKFILLGLTSVPELQI). N-linked (GlcNAc...) asparagine glycosylation is present at asparagine 3. A helical membrane pass occupies residues 24–47 (PLFILFTFIYLLTLCGNLGMMLLI). At 48–55 (LMDSCLHT) the chain is on the cytoplasmic side. The helical transmembrane segment at 56–77 (PMYFFLSNLSLVDFGYSSAVTP) threads the bilayer. Over 78-98 (KVMAGFLRGDKVISYNACAVQ) the chain is Extracellular. A disulfide bridge links cysteine 95 with cysteine 187. Residues 99 to 118 (MFFFVALATVENYLLASMAY) traverse the membrane as a helical segment. Residues 119–137 (DRYAAVCKPLHYTTTMTAS) lie on the Cytoplasmic side of the membrane. Residues 138 to 156 (VGACLALGSYVCGFLNASF) form a helical membrane-spanning segment. Over 157–193 (HIGGIFSLSFCKSNLVHHFFCDVPAVMALSCSDKHTS) the chain is Extracellular. The helical transmembrane segment at 194-217 (EVILVFMSSFNIFFVLLVIFISYL) threads the bilayer. Residues 218-234 (FIFITILKMHSAKGHQK) are Cytoplasmic-facing. A helical transmembrane segment spans residues 235–257 (ALSTCASHFTAVSVFYGTVIFIY). At 258–270 (LQPSSSHSMDTDK) the chain is on the extracellular side. Residues 271–290 (MASVFYAMIIPMLNPVVYSL) traverse the membrane as a helical segment. Residues 291–309 (RNREVQNAFKKVLRRQKFL) lie on the Cytoplasmic side of the membrane.

This sequence belongs to the G-protein coupled receptor 1 family.

It is found in the cell membrane. Its function is as follows. Odorant receptor. The polypeptide is Olfactory receptor 5B2 (OR5B2) (Homo sapiens (Human)).